The primary structure comprises 708 residues: Polyribonucleotide nucleotidyltransferase (708 aa).

Mg(2+)-binding residues include D485 and D491. In terms of domain architecture, KH spans P552–I611. The 69-residue stretch at G621–K689 folds into the S1 motif domain. The interval K689–K708 is disordered.

This sequence belongs to the polyribonucleotide nucleotidyltransferase family. Mg(2+) serves as cofactor.

The protein resides in the cytoplasm. The catalysed reaction is RNA(n+1) + phosphate = RNA(n) + a ribonucleoside 5'-diphosphate. Functionally, involved in mRNA degradation. Catalyzes the phosphorolysis of single-stranded polyribonucleotides processively in the 3'- to 5'-direction. The protein is Polyribonucleotide nucleotidyltransferase of Clostridium kluyveri (strain NBRC 12016).